Here is a 404-residue protein sequence, read N- to C-terminus: Argininosuccinate synthase (404 aa).

ATP is bound by residues 10-18 (AFSGGLDTS) and Ala37. Positions 88 and 93 each coordinate L-citrulline. Gly118 is a binding site for ATP. L-aspartate-binding residues include Thr120, Asn124, and Asp125. Asn124 contributes to the L-citrulline binding site. Residues Arg128, Ser179, Ser188, Glu264, and Tyr276 each coordinate L-citrulline.

It belongs to the argininosuccinate synthase family. Type 1 subfamily. In terms of assembly, homotetramer.

The protein localises to the cytoplasm. It carries out the reaction L-citrulline + L-aspartate + ATP = 2-(N(omega)-L-arginino)succinate + AMP + diphosphate + H(+). It functions in the pathway amino-acid biosynthesis; L-arginine biosynthesis; L-arginine from L-ornithine and carbamoyl phosphate: step 2/3. The sequence is that of Argininosuccinate synthase from Nitrosomonas europaea (strain ATCC 19718 / CIP 103999 / KCTC 2705 / NBRC 14298).